The following is a 1167-amino-acid chain: Topoisomerase 1-associated factor 1 (1167 aa).

5 disordered regions span residues 332 to 353, 563 to 594, 889 to 969, 981 to 1093, and 1105 to 1167; these read SKRW…NNDF, SRRR…DYAE, KYSH…LENT, YVHA…DAID, and FDDD…SDSE. The segment covering 572 to 582 has biased composition (basic and acidic residues); it reads REEQLVNKGSD. 2 stretches are compositionally biased toward acidic residues: residues 583-593 and 949-958; these read EEQESEDEDYA and EEEPVDEETL. Composition is skewed to basic and acidic residues over residues 959-969 and 996-1013; these read EERRQARLENT and EFFR…ERIK. Positions 1062–1074 are enriched in acidic residues; that stretch reads ELEEDDILMDDME. Over residues 1078 to 1088 the composition is skewed to polar residues; it reads RASSGEYSSND. Residues 1110–1127 show a composition bias toward basic and acidic residues; it reads AFGRDRDKDETSVDRDGA.

This sequence belongs to the timeless family.

The protein localises to the nucleus. Functionally, involved in chromosome segregation during meiosis and DNA damage repair. The sequence is that of Topoisomerase 1-associated factor 1 (tof1) from Emericella nidulans (strain FGSC A4 / ATCC 38163 / CBS 112.46 / NRRL 194 / M139) (Aspergillus nidulans).